Consider the following 308-residue polypeptide: Cysteine proteinase 3 (308 aa).

Residues Met1–Ala13 form the signal peptide. Positions Asn14–Ala92 are cleaved as a propeptide — activation peptide. 2 disulfides stabilise this stretch: Cys112–Cys153 and Cys146–Cys186. Cys115 is an active-site residue. Residues His251 and Asn271 contribute to the active site.

The protein belongs to the peptidase C1 family.

It is found in the cytoplasm. The protein localises to the cytoplasmic vesicle. The protein resides in the phagosome. It carries out the reaction Hydrolysis of proteins, including basement membrane collagen and azocasein. Preferential cleavage: Arg-Arg-|-Xaa in small molecule substrates including Z-Arg-Arg-|-NHMec.. In terms of biological role, cysteine protease which may be involved in pathogenicity. The chain is Cysteine proteinase 3 from Entamoeba histolytica (strain ATCC 30459 / HM-1:IMSS / ABRM).